Here is a 184-residue protein sequence, read N- to C-terminus: Shikimate kinase (184 aa).

Residue 12–17 coordinates ATP; sequence GSGKST. A Mg(2+)-binding site is contributed by Ser-16. Asp-34, Arg-58, and Gly-80 together coordinate substrate. Arg-117 is a binding site for ATP. Residue Arg-136 coordinates substrate. Residue Arg-153 coordinates ATP. The interval 164–184 is disordered; that stretch reads SRLDDPTPNTSPSSTASGAAT. Positions 169 to 184 are enriched in low complexity; that stretch reads PTPNTSPSSTASGAAT.

This sequence belongs to the shikimate kinase family. Monomer. Mg(2+) is required as a cofactor.

It is found in the cytoplasm. It catalyses the reaction shikimate + ATP = 3-phosphoshikimate + ADP + H(+). The protein operates within metabolic intermediate biosynthesis; chorismate biosynthesis; chorismate from D-erythrose 4-phosphate and phosphoenolpyruvate: step 5/7. Functionally, catalyzes the specific phosphorylation of the 3-hydroxyl group of shikimic acid using ATP as a cosubstrate. The polypeptide is Shikimate kinase (Mycobacterium ulcerans (strain Agy99)).